The primary structure comprises 342 residues: Leucine-rich repeat-containing protein 23 (342 aa).

Over residues 1-30 (MSDEDDLEDFETDQDDLEREDDEKETEEWE) the composition is skewed to acidic residues. A disordered region spans residues 1–42 (MSDEDDLEDFETDQDDLEREDDEKETEEWEDYRKEGEESEDW). A coiled-coil region spans residues 3–27 (DEDDLEDFETDQDDLEREDDEKETE). LRR repeat units follow at residues 91–112 (HLRYVDVSENHLTDLSPLNHLT), 113–133 (NLLWLKADGNQLRSARLNELP), 134–154 (YLQIASFAYNQITDTEGISHP), 155–176 (RLASLDLKGNRIHMVTGLDPQK), 179–199 (SLHTLELRGNQLNSTLGINLP), 200–221 (KLKNLFLAQNMLKKVEGLENLS), 222–243 (NLTTLHLRDNQIETLSGFSKEM), and 245–266 (SLQYLNLRGNMVADLGELAKLR). Positions 207–342 (AQNMLKKVEG…PESELDQSST (136 aa)) are interaction with RSPH9. The region spanning 279 to 317 (NPCTDENDYRQEALVQIAHLERLDKEFYEEEERAEADEI) is the LRRCT domain. A coiled-coil region spans residues 306–332 (YEEEERAEADEIRQRMKEEQEQEAEVE). The disordered stretch occupies residues 307-342 (EEEERAEADEIRQRMKEEQEQEAEVEPESELDQSST). Over residues 314–324 (ADEIRQRMKEE) the composition is skewed to basic and acidic residues. The span at 325 to 342 (QEQEAEVEPESELDQSST) shows a compositional bias: acidic residues.

In terms of assembly, component of the axonemal radial spoke complex. Interacts with RSPH3. Interacts with RSPH9.

It is found in the cytoplasm. The protein resides in the cytoskeleton. Its subcellular location is the flagellum axoneme. Functionally, essential for sperm motility and male fertility. Plays an important role in the proper assembly of the third radial spoke (RS3) head and the bridge structure between RS2 and RS3 in the sperm flagella. This chain is Leucine-rich repeat-containing protein 23 (LRRC23), found in Bos taurus (Bovine).